Here is a 311-residue protein sequence, read N- to C-terminus: Progestin and adipoQ receptor family member 3 (311 aa).

Residues 1-20 (MHQKLLKSAHYIELGSYQYW) form a required for interaction with SREBF2 region. Topologically, residues 1–73 (MHQKLLKSAH…FILSNETVNI (73 aa)) are cytoplasmic. A required for interaction with SCAP region spans residues 41 to 60 (KDNPYITDGYRAYLPSRLCI). Positions 61–71 (KSLFILSNETV) are golgi targeting. The helical transmembrane segment at 74–96 (WSHLLGFFLFFTLGIYDMTSVLP) threads the bilayer. Residues 97–105 (SASASREDF) lie on the Lumenal side of the membrane. Residues 106–128 (VICSICLFCFQVCMLCSVGYHLF) traverse the membrane as a helical segment. Topologically, residues 129-140 (SCHRSEKTCRRW) are cytoplasmic. The helical transmembrane segment at 141 to 163 (MALDYAGISIGILGCYVSGVFYA) threads the bilayer. Over 164–172 (FYCNNYWRQ) the chain is Lumenal. The chain crosses the membrane as a helical span at residues 173-195 (VYLITVLAMILAVFFAQIHPNYL). The Cytoplasmic portion of the chain corresponds to 196–201 (TQQWQR). A helical membrane pass occupies residues 202-224 (LRSIIFCSVSGYGVIPTLHWVWL). Residues 225–238 (NGGIGAPIVQDFAP) lie on the Lumenal side of the membrane. The helical transmembrane segment at 239–256 (RVIVMYMIALLAFLFYIS) threads the bilayer. Residues 257–275 (KVPERYFPGQLNYLGSSHQ) lie on the Cytoplasmic side of the membrane. The chain crosses the membrane as a helical span at residues 276–298 (IWHILAVVMLYWWHQSTVYVMQY). A golgi targeting region spans residues 299-303 (RHSKP). The Lumenal portion of the chain corresponds to 299 to 311 (RHSKPCPDYVSHL).

Belongs to the ADIPOR family. Interacts with SCAP and SREBF2; the interactions are direct, increase in low cholesterol conditions and tether SCAP:SREBP complex to the Golgi apparatus. Interaction with SCAP is mutually exclusive with INSIG1. In hepatocytes, interacts with PPARA and HUWE1; the interactions promote PPARA poylubiquitination and HUWE1-mediated degradation. In macrophages, interacts with PPARG and STUB1; the interactions promote PPARG poylubiquitination and STUB1-mediated degradation. In terms of tissue distribution, widely expressed in a range of tissues.

The protein localises to the golgi apparatus membrane. Functionally, golgi-scaffold protein which modulates its interactors acitivies by anchoring them to the Golgi apparatus. Functions as a spatial regulator of RAF1 kinase by sequestrating it to the Golgi apparatus. Acts as a positive regulator of cholesterol biosynthesis by mediating the anchoring of the SCAP:SREBP complex in the Golgi apparatus, thereby promoting SCAP:SREBF2 complex formation, potentiating SREBF2 and SREBF1 processing and enhancing lipid synthesis. Also regulates PPARA and PPARG functions by mediating their interaction with E3 ubiquitin ligases, such as STUB1 or HUWE1, leading to their polyubiquitination and proteasome-mediated degradation. The sequence is that of Progestin and adipoQ receptor family member 3 from Homo sapiens (Human).